The primary structure comprises 205 residues: Small ribosomal subunit protein uS4 (205 aa).

Basic residues predominate over residues 1–12 (MSKRVQAKHKLD). The interval 1-49 (MSKRVQAKHKLDRRMGQNIWGRPKSPVNRREYGPGQHGQRRKGKMSDFG) is disordered. The S4 RNA-binding domain occupies 94 to 155 (RRLDAVVYRS…ASRQLEIVVV (62 aa)).

The protein belongs to the universal ribosomal protein uS4 family. As to quaternary structure, part of the 30S ribosomal subunit. Contacts protein S5. The interaction surface between S4 and S5 is involved in control of translational fidelity.

Its function is as follows. One of the primary rRNA binding proteins, it binds directly to 16S rRNA where it nucleates assembly of the body of the 30S subunit. With S5 and S12 plays an important role in translational accuracy. The sequence is that of Small ribosomal subunit protein uS4 from Methylorubrum extorquens (strain CM4 / NCIMB 13688) (Methylobacterium extorquens).